Reading from the N-terminus, the 272-residue chain is Tryptophan synthase alpha chain (272 aa).

Active-site proton acceptor residues include Glu53 and Asp64.

This sequence belongs to the TrpA family. In terms of assembly, tetramer of two alpha and two beta chains.

It catalyses the reaction (1S,2R)-1-C-(indol-3-yl)glycerol 3-phosphate + L-serine = D-glyceraldehyde 3-phosphate + L-tryptophan + H2O. It functions in the pathway amino-acid biosynthesis; L-tryptophan biosynthesis; L-tryptophan from chorismate: step 5/5. In terms of biological role, the alpha subunit is responsible for the aldol cleavage of indoleglycerol phosphate to indole and glyceraldehyde 3-phosphate. The sequence is that of Tryptophan synthase alpha chain from Xanthomonas campestris pv. campestris (strain B100).